Reading from the N-terminus, the 329-residue chain is Phenylalanine--tRNA ligase alpha subunit (329 aa).

A Mg(2+)-binding site is contributed by Glu254.

It belongs to the class-II aminoacyl-tRNA synthetase family. Phe-tRNA synthetase alpha subunit type 1 subfamily. Tetramer of two alpha and two beta subunits. Mg(2+) serves as cofactor.

The protein resides in the cytoplasm. It carries out the reaction tRNA(Phe) + L-phenylalanine + ATP = L-phenylalanyl-tRNA(Phe) + AMP + diphosphate + H(+). This is Phenylalanine--tRNA ligase alpha subunit from Mannheimia succiniciproducens (strain KCTC 0769BP / MBEL55E).